The following is a 95-amino-acid chain: Aspartyl/glutamyl-tRNA(Asn/Gln) amidotransferase subunit C (95 aa).

This sequence belongs to the GatC family. Heterotrimer of A, B and C subunits.

It carries out the reaction L-glutamyl-tRNA(Gln) + L-glutamine + ATP + H2O = L-glutaminyl-tRNA(Gln) + L-glutamate + ADP + phosphate + H(+). It catalyses the reaction L-aspartyl-tRNA(Asn) + L-glutamine + ATP + H2O = L-asparaginyl-tRNA(Asn) + L-glutamate + ADP + phosphate + 2 H(+). In terms of biological role, allows the formation of correctly charged Asn-tRNA(Asn) or Gln-tRNA(Gln) through the transamidation of misacylated Asp-tRNA(Asn) or Glu-tRNA(Gln) in organisms which lack either or both of asparaginyl-tRNA or glutaminyl-tRNA synthetases. The reaction takes place in the presence of glutamine and ATP through an activated phospho-Asp-tRNA(Asn) or phospho-Glu-tRNA(Gln). The sequence is that of Aspartyl/glutamyl-tRNA(Asn/Gln) amidotransferase subunit C from Geotalea daltonii (strain DSM 22248 / JCM 15807 / FRC-32) (Geobacter daltonii).